The sequence spans 156 residues: 6,7-dimethyl-8-ribityllumazine synthase (156 aa).

5-amino-6-(D-ribitylamino)uracil-binding positions include Phe-23, 57–59 (AYE), and 81–83 (AII). Position 86-87 (86-87 (ST)) interacts with (2S)-2-hydroxy-3-oxobutyl phosphate. His-89 acts as the Proton donor in catalysis. Phe-114 provides a ligand contact to 5-amino-6-(D-ribitylamino)uracil. Arg-128 is a (2S)-2-hydroxy-3-oxobutyl phosphate binding site.

It belongs to the DMRL synthase family.

It carries out the reaction (2S)-2-hydroxy-3-oxobutyl phosphate + 5-amino-6-(D-ribitylamino)uracil = 6,7-dimethyl-8-(1-D-ribityl)lumazine + phosphate + 2 H2O + H(+). The protein operates within cofactor biosynthesis; riboflavin biosynthesis; riboflavin from 2-hydroxy-3-oxobutyl phosphate and 5-amino-6-(D-ribitylamino)uracil: step 1/2. Its function is as follows. Catalyzes the formation of 6,7-dimethyl-8-ribityllumazine by condensation of 5-amino-6-(D-ribitylamino)uracil with 3,4-dihydroxy-2-butanone 4-phosphate. This is the penultimate step in the biosynthesis of riboflavin. In Campylobacter hominis (strain ATCC BAA-381 / DSM 21671 / CCUG 45161 / LMG 19568 / NCTC 13146 / CH001A), this protein is 6,7-dimethyl-8-ribityllumazine synthase.